A 186-amino-acid chain; its full sequence is Adenine phosphoribosyltransferase (186 aa).

It belongs to the purine/pyrimidine phosphoribosyltransferase family. In terms of assembly, homodimer.

It localises to the cytoplasm. The enzyme catalyses AMP + diphosphate = 5-phospho-alpha-D-ribose 1-diphosphate + adenine. Its pathway is purine metabolism; AMP biosynthesis via salvage pathway; AMP from adenine: step 1/1. Catalyzes a salvage reaction resulting in the formation of AMP, that is energically less costly than de novo synthesis. The polypeptide is Adenine phosphoribosyltransferase (Xanthomonas axonopodis pv. citri (strain 306)).